Here is a 906-residue protein sequence, read N- to C-terminus: Ectonucleotide pyrophosphatase/phosphodiesterase family member 1 (906 aa).

The interval 1-25 (MERDGEQAGQGPRHGPAGNGRELES) is disordered. Topologically, residues 1-58 (MERDGEQAGQGPRHGPAGNGRELESPAAASLLAPMDLGEEPLEKAERARTAKDPNTYK) are cytoplasmic. Phosphoserine is present on Ser-25. The Di-leucine motif signature appears at 27-34 (AAASLLAP). The chain crosses the membrane as a helical; Signal-anchor for type II membrane protein span at residues 59–79 (VLSLVLSVCVLTTILGCIFGL). Over 80 to 906 (KPSCAKEVKS…THLPIFSQED (827 aa)) the chain is Extracellular. SMB domains are found at residues 86-126 (EVKS…VEPT) and 127-170 (HIWT…QEKK). Cystine bridges form between Cys-90-Cys-104, Cys-94-Cys-122, Cys-102-Cys-115, Cys-108-Cys-114, Cys-131-Cys-148, Cys-136-Cys-166, Cys-146-Cys-159, Cys-152-Cys-158, Cys-177-Cys-223, and Cys-185-Cys-397. Asn-161 is a glycosylation site (N-linked (GlcNAc...) asparagine). Residues 173-573 (VEEACETIDA…APNNESHGSL (401 aa)) form a phosphodiesterase region. AMP contacts are provided by Asp-200, Thr-238, and Asn-259. Residues Asp-200 and Thr-238 each contribute to the Zn(2+) site. Thr-238 acts as the AMP-threonine intermediate in catalysis. CMP contacts are provided by Thr-238 and Asn-259. The dTMP site is built by Thr-238 and Asn-259. 2 residues coordinate GMP: Thr-238 and Asn-259. Position 238 is a phosphothreonine (Thr-238). Asn-267 carries an N-linked (GlcNAc...) asparagine glycan. GMP is bound by residues Leu-272, Lys-277, and Tyr-322. Residues Lys-277 and Tyr-322 each coordinate AMP. 2 residues coordinate CMP: Lys-277 and Tyr-322. Position 322 (Tyr-322) interacts with dTMP. N-linked (GlcNAc...) asparagine glycosylation occurs at Asn-323. Asp-358 lines the AMP pocket. Positions 358, 362, 405, and 406 each coordinate Zn(2+). A CMP-binding site is contributed by Asp-358. Asp-358 contributes to the dTMP binding site. Asp-358 is a GMP binding site. His-362 lines the 2',3'-cGAMP pocket. His-406 contributes to the AMP binding site. Residue His-406 coordinates CMP. DTMP is bound at residue His-406. His-406 serves as a coordination point for GMP. 6 disulfides stabilise this stretch: Cys-413–Cys-512, Cys-462–Cys-849, Cys-596–Cys-653, Cys-607–Cys-707, Cys-609–Cys-692, and Cys-819–Cys-829. Residue Asn-459 is glycosylated (N-linked (GlcNAc...) asparagine). Residue Ser-514 participates in 2',3'-cGAMP binding. His-517 contributes to the AMP binding site. His-517 contributes to the Zn(2+) binding site. CMP is bound at residue His-517. A dTMP-binding site is contributed by His-517. Residue His-517 participates in GMP binding. N-linked (GlcNAc...) asparagine glycans are attached at residues Asn-567 and Asn-624. A linker region spans residues 579 to 628 (KPIYTPSHPKEESFLSQCPIKSVSSDLGCTCDPSIVPIMDFEKQFNLTTD). Positions 635–906 (SMTVPNGRPR…THLPIFSQED (272 aa)) are nuclease-like domain. Positions 781, 783, 785, 787, and 789 each coordinate Ca(2+).

Belongs to the nucleotide pyrophosphatase/phosphodiesterase family. As to quaternary structure, ectonucleotide pyrophosphatase/phosphodiesterase family member 1: Homodimer. Ectonucleotide pyrophosphatase/phosphodiesterase family member 1: Interacts with INSR; leading to inhibit INSR autophosphorylation and subsequent activation of INSR kinase activity. Ectonucleotide pyrophosphatase/phosphodiesterase family member 1, secreted form: Monomeric. Zn(2+) serves as cofactor. The secreted form is produced through cleavage at Lys-85 by intracellular processing.

The protein localises to the cell membrane. Its subcellular location is the basolateral cell membrane. It is found in the secreted. It catalyses the reaction Hydrolytically removes 5'-nucleotides successively from the 3'-hydroxy termini of 3'-hydroxy-terminated oligonucleotides.. It carries out the reaction a ribonucleoside 5'-triphosphate + H2O = a ribonucleoside 5'-phosphate + diphosphate + H(+). The enzyme catalyses ATP + H2O = AMP + diphosphate + H(+). The catalysed reaction is UTP + H2O = UMP + diphosphate + H(+). It catalyses the reaction GTP + H2O = GMP + diphosphate + H(+). It carries out the reaction CTP + H2O = CMP + diphosphate + H(+). The enzyme catalyses 2',3'-cGAMP + 2 H2O = GMP + AMP + 2 H(+). The catalysed reaction is P(1),P(4)-bis(5'-adenosyl) tetraphosphate + H2O = AMP + ATP + 2 H(+). It catalyses the reaction 3',5'-cyclic AMP + H2O = AMP + H(+). Its activity is regulated as follows. At low concentrations of ATP, a phosphorylated intermediate is formed which inhibits further hydrolysis. Nucleotide pyrophosphatase that generates diphosphate (PPi) and functions in bone mineralization and soft tissue calcification by regulating pyrophosphate levels. PPi inhibits bone mineralization and soft tissue calcification by binding to nascent hydroxyapatite crystals, thereby preventing further growth of these crystals. Preferentially hydrolyzes ATP, but can also hydrolyze other nucleoside 5' triphosphates such as GTP, CTP and UTP to their corresponding monophosphates with release of pyrophosphate, as well as diadenosine polyphosphates, and also 3',5'-cAMP to AMP. May also be involved in the regulation of the availability of nucleotide sugars in the endoplasmic reticulum and Golgi, and the regulation of purinergic signaling. Inhibits ectopic joint calcification and maintains articular chondrocytes by repressing hedgehog signaling; it is however unclear whether hedgehog inhibition is direct or indirect. Appears to modulate insulin sensitivity. Also involved in melanogenesis. Also able to hydrolyze 2',3'-cGAMP (cyclic GMP-AMP), a second messenger that activates TMEM173/STING and triggers type-I interferon production. 2',3'-cGAMP degradation takes place in the lumen or extracellular space, and not in the cytosol where it is produced; the role of 2',3'-cGAMP hydrolysis is therefore unclear. Not able to hydrolyze the 2',3'-cGAMP linkage isomer 3'-3'-cGAMP. This chain is Ectonucleotide pyrophosphatase/phosphodiesterase family member 1, found in Rattus norvegicus (Rat).